The chain runs to 148 residues: Hemoglobin subunit gamma (148 aa).

One can recognise a Globin domain in the interval 3-148 (HFTAEEKAII…VAIAMGHKYH (146 aa)). Heme b is bound by residues histidine 64 and histidine 93.

This sequence belongs to the globin family. As to quaternary structure, heterotetramer of two alpha chains and two gamma chains in fetal hemoglobin (Hb F). In terms of tissue distribution, red blood cells.

Functionally, gamma chains make up the fetal hemoglobin F, in combination with alpha chains. This is Hemoglobin subunit gamma (HBG) from Carlito syrichta (Philippine tarsier).